The following is a 420-amino-acid chain: Sodium/proton antiporter 2 (420 aa).

Transmembrane regions (helical) follow at residues 25 to 45 (IALL…SVEI), 60 to 80 (IVFY…HQGF), 94 to 114 (ILLW…DNLT), 136 to 156 (LGAV…IGDV), 173 to 193 (IKNL…LMSL), 221 to 241 (LVFG…SLTG), 242 to 262 (LPPY…TDVI), 285 to 305 (GALF…AGIL), 321 to 341 (LIAS…LVAA), 363 to 383 (FCAG…VIFM), and 400 to 420 (FAFA…NFPL).

Belongs to the NhaD Na(+)/H(+) (TC 2.A.62) antiporter family.

The protein resides in the membrane. Na(+)/H(+) antiporter that extrudes sodium in exchange for external protons. In Arabidopsis thaliana (Mouse-ear cress), this protein is Sodium/proton antiporter 2.